The sequence spans 337 residues: MAAFSCLDLQEGLRTLSILQWIPVYVLLGTLSILGMPYLLLFTTLWPLSVLFLVWIAYDWNTHIQDGRRSAWVRNWTLWKYFQSYFPVKLVKTHDLSPKHNYIILSHPHGILSYGAFINFATESTGFSRVFPSITPFLATLEGIFWIPFVRDYLMSLGICPVSKLSLTHKLTQKDSGNAVIIVPGGASESLLSRPGVSMIYLKKRQGFVKLALKTGAYLVPSYSFGENETYNQETFAEGTWLRFFQKNIQKIGKRILGINLCTIHGRGLTRGSWGFLPFNHPITTVVGEPLPVPKIPDPDKETVEKYLELYISALRKLFDQHKAEYGLSKTHELKIL.

Helical transmembrane passes span Ile22–Phe42 and Tyr102–Thr122.

The protein belongs to the diacylglycerol acyltransferase family.

It is found in the endoplasmic reticulum membrane. It catalyses the reaction 1,2-di-(9Z-octadecenoyl)-sn-glycerol + (9Z)-octadecenoyl-CoA = 1,2,3-tri-(9Z-octadecenoyl)-glycerol + CoA. Diglyceride acyltransferase that uses fatty acyl-CoA as substrate. Particularly active with oleate as a substrate. Has no wax synthase activity to produce wax esters. The sequence is that of Diacylglycerol O-acyltransferase 2-like protein 6 (Dgat2l6) from Mus musculus (Mouse).